The following is a 633-amino-acid chain: Extracellular metalloproteinase 3 (633 aa).

Positions 1 to 18 are cleaved as a signal peptide; it reads MHGLLLAGLLALPMNVLA. Residues 19–246 constitute a propeptide that is removed on maturation; the sequence is HPAEQHASNV…VHNVVDYVAS (228 aa). Residue Asn-410 is glycosylated (N-linked (GlcNAc...) asparagine). His-429 is a Zn(2+) binding site. Residue Glu-430 is part of the active site. Residue His-433 participates in Zn(2+) binding. N-linked (GlcNAc...) asparagine glycosylation is found at Asn-480 and Asn-622.

It belongs to the peptidase M36 family. Requires Zn(2+) as cofactor.

The protein localises to the secreted. Functionally, secreted metalloproteinase probably acting as a virulence factor. The polypeptide is Extracellular metalloproteinase 3 (MEP3) (Arthroderma benhamiae (Trichophyton mentagrophytes)).